The chain runs to 224 residues: Ribonuclease T (224 aa).

One can recognise an Exonuclease domain in the interval 20–194 (VVIDVETAGF…YDTERTAELF (175 aa)). Positions 23, 25, 181, and 186 each coordinate Mg(2+). His-181 (proton donor/acceptor) is an active-site residue.

The protein belongs to the RNase T family. As to quaternary structure, homodimer. The cofactor is Mg(2+).

Its function is as follows. Trims short 3' overhangs of a variety of RNA species, leaving a one or two nucleotide 3' overhang. Responsible for the end-turnover of tRNA: specifically removes the terminal AMP residue from uncharged tRNA (tRNA-C-C-A). Also appears to be involved in tRNA biosynthesis. This is Ribonuclease T from Enterobacter sp. (strain 638).